The sequence spans 238 residues: Tetraspanin-4 (238 aa).

Topologically, residues 1–13 are cytoplasmic; it reads MARGCLQGVKYLM. The chain crosses the membrane as a helical span at residues 14–34; the sequence is FAFNLLFWLGGCGVLGVGIWL. The Extracellular segment spans residues 35 to 55; sequence AATQGNFATLSSSFPSLSAAN. A helical transmembrane segment spans residues 56-76; it reads LLIVTGTFVMAIGFVGCIGAL. Over 77–85 the chain is Cytoplasmic; that stretch reads KENKCLLLT. Residues 86–106 traverse the membrane as a helical segment; the sequence is FFVLLLLVFLLEATIAVLFFA. Over 107 to 201 the chain is Extracellular; that stretch reads YSDKIDSYAQ…ETVKAWLQEN (95 aa). 2 N-linked (GlcNAc...) asparagine glycosylation sites follow: asparagine 152 and asparagine 161. A helical transmembrane segment spans residues 202 to 222; it reads LLAVGIFGLCTALVQILGLTF. Residues 223 to 238 lie on the Cytoplasmic side of the membrane; it reads AMTMYCQVVKADTYCA.

It belongs to the tetraspanin (TM4SF) family. Forms a complex with integrins.

The protein localises to the membrane. In Mus musculus (Mouse), this protein is Tetraspanin-4 (Tspan4).